We begin with the raw amino-acid sequence, 227 residues long: PKHD-type hydroxylase Caul_0045 (227 aa).

One can recognise a Fe2OG dioxygenase domain in the interval 78-178 (TILSPLFNRY…RTASFFWIQS (101 aa)). 3 residues coordinate Fe cation: His96, Asp98, and His159. Arg169 provides a ligand contact to 2-oxoglutarate.

Fe(2+) serves as cofactor. Requires L-ascorbate as cofactor.

The protein is PKHD-type hydroxylase Caul_0045 of Caulobacter sp. (strain K31).